The primary structure comprises 270 residues: Tetraspanin-17 (270 aa).

Residues 1–19 lie on the Cytoplasmic side of the membrane; sequence MPGKHQHFQEPEVGCCGKY. A helical membrane pass occupies residues 20–40; the sequence is FLFGFNIVFWVLGALFLAIGL. Topologically, residues 41–63 are extracellular; it reads WAWGEKGVLSNISALTDLGGLDP. N-linked (GlcNAc...) asparagine glycosylation is present at asparagine 51. Residues 64–84 form a helical membrane-spanning segment; it reads VWLFVVVGGVMSVLGFAGCIG. Residues 85–94 are Cytoplasmic-facing; that stretch reads ALRENTFLLK. Residues 95 to 115 form a helical membrane-spanning segment; sequence FFSVFLGLIFFLELATGILAF. The Extracellular portion of the chain corresponds to 116–234; the sequence is VFKDWIRDQL…GQFEKWLQDN (119 aa). 4 disulfide bridges follow: cysteine 155–cysteine 223, cysteine 156–cysteine 188, cysteine 172–cysteine 182, and cysteine 189–cysteine 202. An N-linked (GlcNAc...) asparagine glycan is attached at asparagine 171. A helical membrane pass occupies residues 235 to 255; it reads LIVVAGVFMGIALLQIFGICL. Residues 256–270 lie on the Cytoplasmic side of the membrane; it reads AQNLVSDIKAVKANW.

This sequence belongs to the tetraspanin (TM4SF) family. Interacts with ADAM10; the interaction influences ADAM10 substrate specificity, endocytosis and turnover.

It is found in the cell membrane. Its function is as follows. Part of TspanC8 subgroup, composed of 6 members that interact with the transmembrane metalloprotease ADAM10. This interaction is required for ADAM10 exit from the endoplasmic reticulum and for enzymatic maturation and trafficking to the cell surface as well as substrate specificity. Different TspanC8/ADAM10 complexes have distinct substrates. Seems to regulate VE-cadherin expression in endothelial cells probably through interaction with ADAM10, promoting leukocyte transmigration. The sequence is that of Tetraspanin-17 from Homo sapiens (Human).